A 187-amino-acid chain; its full sequence is Elongation factor P (187 aa).

Belongs to the elongation factor P family.

It localises to the cytoplasm. Its pathway is protein biosynthesis; polypeptide chain elongation. Its function is as follows. Involved in peptide bond synthesis. Stimulates efficient translation and peptide-bond synthesis on native or reconstituted 70S ribosomes in vitro. Probably functions indirectly by altering the affinity of the ribosome for aminoacyl-tRNA, thus increasing their reactivity as acceptors for peptidyl transferase. In Synechococcus sp. (strain CC9311), this protein is Elongation factor P.